Here is a 109-residue protein sequence, read N- to C-terminus: Nucleoid-associated protein YbaB (109 aa).

The protein belongs to the YbaB/EbfC family. Homodimer.

Its subcellular location is the cytoplasm. The protein localises to the nucleoid. Functionally, binds to DNA and alters its conformation. May be involved in regulation of gene expression, nucleoid organization and DNA protection. The protein is Nucleoid-associated protein YbaB of Escherichia coli O127:H6 (strain E2348/69 / EPEC).